Here is a 437-residue protein sequence, read N- to C-terminus: Aspartate--tRNA(Asp/Asn) ligase (437 aa).

Glu175 provides a ligand contact to L-aspartate. The segment at 197–200 (QLYK) is aspartate. Arg219 is a binding site for L-aspartate. Residues 219-221 (RAE), 227-229 (RHL), and Glu360 each bind ATP. The Mg(2+) site is built by Glu360 and Ser363. L-aspartate contacts are provided by Ser363 and Arg367. 408 to 411 (GAER) lines the ATP pocket.

It belongs to the class-II aminoacyl-tRNA synthetase family. Type 2 subfamily. Homodimer. The cofactor is Mg(2+).

Its subcellular location is the cytoplasm. The catalysed reaction is tRNA(Asx) + L-aspartate + ATP = L-aspartyl-tRNA(Asx) + AMP + diphosphate. Aspartyl-tRNA synthetase with relaxed tRNA specificity since it is able to aspartylate not only its cognate tRNA(Asp) but also tRNA(Asn). Reaction proceeds in two steps: L-aspartate is first activated by ATP to form Asp-AMP and then transferred to the acceptor end of tRNA(Asp/Asn). In Methanothermobacter thermautotrophicus (strain ATCC 29096 / DSM 1053 / JCM 10044 / NBRC 100330 / Delta H) (Methanobacterium thermoautotrophicum), this protein is Aspartate--tRNA(Asp/Asn) ligase.